A 223-amino-acid chain; its full sequence is Ribosomal RNA small subunit methyltransferase G (223 aa).

S-adenosyl-L-methionine contacts are provided by residues G90, L95, 141–142 (VE), and R156.

The protein belongs to the methyltransferase superfamily. RNA methyltransferase RsmG family.

It is found in the cytoplasm. It carries out the reaction guanosine(527) in 16S rRNA + S-adenosyl-L-methionine = N(7)-methylguanosine(527) in 16S rRNA + S-adenosyl-L-homocysteine. Functionally, specifically methylates the N7 position of guanine in position 527 of 16S rRNA. This is Ribosomal RNA small subunit methyltransferase G from Ralstonia nicotianae (strain ATCC BAA-1114 / GMI1000) (Ralstonia solanacearum).